We begin with the raw amino-acid sequence, 124 residues long: Large ribosomal subunit protein bL17 (124 aa).

It belongs to the bacterial ribosomal protein bL17 family. Part of the 50S ribosomal subunit. Contacts protein L32.

This Trichlorobacter lovleyi (strain ATCC BAA-1151 / DSM 17278 / SZ) (Geobacter lovleyi) protein is Large ribosomal subunit protein bL17.